The chain runs to 138 residues: Phosphoribosyl-AMP cyclohydrolase (138 aa).

Asp84 contacts Mg(2+). Cys85 lines the Zn(2+) pocket. Residues Asp86 and Asp88 each contribute to the Mg(2+) site. Zn(2+) contacts are provided by Cys102 and Cys109.

The protein belongs to the PRA-CH family. As to quaternary structure, homodimer. The cofactor is Mg(2+). Zn(2+) serves as cofactor.

It localises to the cytoplasm. The enzyme catalyses 1-(5-phospho-beta-D-ribosyl)-5'-AMP + H2O = 1-(5-phospho-beta-D-ribosyl)-5-[(5-phospho-beta-D-ribosylamino)methylideneamino]imidazole-4-carboxamide. It participates in amino-acid biosynthesis; L-histidine biosynthesis; L-histidine from 5-phospho-alpha-D-ribose 1-diphosphate: step 3/9. Functionally, catalyzes the hydrolysis of the adenine ring of phosphoribosyl-AMP. This chain is Phosphoribosyl-AMP cyclohydrolase, found in Burkholderia ambifaria (strain ATCC BAA-244 / DSM 16087 / CCUG 44356 / LMG 19182 / AMMD) (Burkholderia cepacia (strain AMMD)).